Reading from the N-terminus, the 303-residue chain is METKDWYKLTFLIESDSEEIIIWKLNELGIFSFSFEYLIKNENKKEVNIWLPIDDWDESSRSSFEKIIIKLLNINPPKNKFFEWSIIKQEDWLTSWKKYWAPELVGNHFLILPCWINLNKKFKDKQIIKIDPGAAFGTGSHPSTYLCLEKMENILFSDKKVLDIGSGSGILSVAARLLGAKEVCAVDNDYLAINSTKSNFQLNFGNLNKLNTYLGSFNEVILKNQLEQFDFVLCNILAEVIKGMIPNIYKCLRNNGEVIFSGILNSQKDEIIKILIQHDLKLLDVSTRKDWACISAQKASNST.

Positions 144, 165, 187, and 235 each coordinate S-adenosyl-L-methionine.

Belongs to the methyltransferase superfamily. PrmA family.

Its subcellular location is the cytoplasm. The catalysed reaction is L-lysyl-[protein] + 3 S-adenosyl-L-methionine = N(6),N(6),N(6)-trimethyl-L-lysyl-[protein] + 3 S-adenosyl-L-homocysteine + 3 H(+). Methylates ribosomal protein L11. This is Ribosomal protein L11 methyltransferase from Prochlorococcus marinus (strain MIT 9301).